The chain runs to 657 residues: Pyoverdine export ATP-binding/permease protein PvdT (657 aa).

The region spanning 6–245 (IDLRNIRKSY…LSANAGALQA (240 aa)) is the ABC transporter domain. 43–50 (GASGSGKS) provides a ligand contact to ATP. 4 consecutive transmembrane segments (helical) span residues 285-305 (ALTL…LAVG), 532-552 (LSLM…IGVM), 590-610 (LSVV…GILI), and 620-640 (LAAV…FGFM).

It belongs to the ABC transporter superfamily. Macrolide exporter (TC 3.A.1.122) family. As to quaternary structure, part of the tripartite efflux system PvdRT-OpmQ, which is composed of an inner membrane component with both ATPase and permease domains, PvdT, a periplasmic membrane fusion protein, PvdR, and an outer membrane component, OpmQ.

Its subcellular location is the cell inner membrane. In terms of biological role, part of the tripartite efflux system PvdRT-OpmQ required for the secretion into the extracellular milieu of the siderophore pyoverdine (PVD), which is involved in iron acquisition. This subunit binds PVD and drives its secretion by hydrolyzing ATP. The system is responsible for export of newly synthesized PVD after the final steps of biosynthesis have taken place in the periplasm. It is also responsible for recycling of PVD after internalization of ferri-PVD into the periplasm by the outer-membrane receptor FpvA and release of iron from PVD, thus making PVD available for new cycles of iron uptake. The polypeptide is Pyoverdine export ATP-binding/permease protein PvdT (Pseudomonas fluorescens (strain ATCC BAA-477 / NRRL B-23932 / Pf-5)).